The following is a 72-amino-acid chain: Large ribosomal subunit protein uL29 (72 aa).

Belongs to the universal ribosomal protein uL29 family.

The protein is Large ribosomal subunit protein uL29 of Chlamydia trachomatis serovar L2 (strain ATCC VR-902B / DSM 19102 / 434/Bu).